The sequence spans 57 residues: Protein GnsB (57 aa).

This sequence belongs to the gns family.

In terms of biological role, overexpression increases levels of unsaturated fatty acids and suppresses both the temperature-sensitive fabA6 mutation and cold-sensitive secG null mutation. The chain is Protein GnsB (gnsB) from Escherichia coli (strain K12).